Reading from the N-terminus, the 297-residue chain is 2-phospho-L-lactate transferase (297 aa).

Aspartate 49 provides a ligand contact to 7,8-didemethyl-8-hydroxy-5-deazariboflavin.

Belongs to the CofD family. Homodimer. Requires Mg(2+) as cofactor.

The enzyme catalyses (2S)-lactyl-2-diphospho-5'-guanosine + 7,8-didemethyl-8-hydroxy-5-deazariboflavin = oxidized coenzyme F420-0 + GMP + H(+). The protein operates within cofactor biosynthesis; coenzyme F420 biosynthesis. Catalyzes the transfer of the 2-phospholactate moiety from (2S)-lactyl-2-diphospho-5'-guanosine to 7,8-didemethyl-8-hydroxy-5-deazariboflavin (FO) with the formation of oxidized coenzyme F420-0 and GMP. This chain is 2-phospho-L-lactate transferase, found in Methanospirillum hungatei JF-1 (strain ATCC 27890 / DSM 864 / NBRC 100397 / JF-1).